The primary structure comprises 616 residues: Homeodomain-interacting protein kinase 4 (616 aa).

The 337-residue stretch at 11-347 (YDIIEVLGKG…PSAALRHPFV (337 aa)) folds into the Protein kinase domain. ATP-binding positions include 17–25 (LGKGTFGEV) and lysine 40. Aspartate 136 acts as the Proton acceptor in catalysis. The segment at 487 to 616 (HKARKAPAGS…SFLQHVGGHH (130 aa)) is disordered. Residues 497–512 (KSDSNFSNLIRLSQAS) are compositionally biased toward polar residues. Residue serine 512 is modified to Phosphoserine. The span at 542–560 (REGDGPSIKDRPMDAERSG) shows a compositional bias: basic and acidic residues.

Belongs to the protein kinase superfamily. CMGC Ser/Thr protein kinase family. HIPK subfamily. In terms of processing, autophosphorylated.

It is found in the cytoplasm. It carries out the reaction L-seryl-[protein] + ATP = O-phospho-L-seryl-[protein] + ADP + H(+). The enzyme catalyses L-threonyl-[protein] + ATP = O-phospho-L-threonyl-[protein] + ADP + H(+). Protein kinase that phosphorylates TP53, and thus induces TP53 repression of BIRC5 promoter. May act as a corepressor of transcription factors (Potential). This chain is Homeodomain-interacting protein kinase 4 (Hipk4), found in Rattus norvegicus (Rat).